The primary structure comprises 551 residues: Ubiquitin domain-containing protein DSK2b (551 aa).

Residues V18–S93 form the Ubiquitin-like domain. The tract at residues R88–P127 is disordered. 2 consecutive STI1 domains span residues G143 to M184 and N197 to M236. A compositionally biased stretch (polar residues) spans Q294–N319. Residues Q294–A336 are disordered. STI1 domains are found at residues S373 to L410 and N414 to M449. Residues S455–G475 are disordered. Positions Q465–G475 are enriched in low complexity. Residues P504 to S548 enclose the UBA domain.

As to quaternary structure, interacts with 'Lys-48'-linked polyubiquitin chains via its UBA domain. Interacts with RPN10 via its ubiquitin-like domain. Interacts with PEX2 and PEX12. Ubiquitous.

It localises to the nucleus. It is found in the cytoplasm. Its function is as follows. Binds and presumably selects ubiquitin-conjugates for destruction. Prefers multiubiquitin chains rather than single ubiquitins, with a binding affinity for 'Lys-48'-linked ubiquitin chains. Acts as a ubiquitin receptor that associates with the 26S proteasomal docking subunit RPN10 for the indirect recognition of ubiquitinated substrates of ubiquitin/26S proteasome-mediated proteolysis (UPP). The polypeptide is Ubiquitin domain-containing protein DSK2b (DSK2B) (Arabidopsis thaliana (Mouse-ear cress)).